We begin with the raw amino-acid sequence, 321 residues long: Ribosomal RNA small subunit methyltransferase H (321 aa).

S-adenosyl-L-methionine is bound by residues 40-42, D60, F84, D106, and Q113; that span reads GGH.

This sequence belongs to the methyltransferase superfamily. RsmH family.

The protein resides in the cytoplasm. It carries out the reaction cytidine(1402) in 16S rRNA + S-adenosyl-L-methionine = N(4)-methylcytidine(1402) in 16S rRNA + S-adenosyl-L-homocysteine + H(+). Its function is as follows. Specifically methylates the N4 position of cytidine in position 1402 (C1402) of 16S rRNA. The sequence is that of Ribosomal RNA small subunit methyltransferase H from Pasteurella multocida (strain Pm70).